A 459-amino-acid polypeptide reads, in one-letter code: Cysteine--tRNA ligase (459 aa).

C28 serves as a coordination point for Zn(2+). Positions 30–40 (VTVYDLCHFGH) match the 'HIGH' region motif. 3 residues coordinate Zn(2+): C209, H234, and E238. A 'KMSKS' region motif is present at residues 266-270 (KMSKS). K269 is a binding site for ATP.

This sequence belongs to the class-I aminoacyl-tRNA synthetase family. As to quaternary structure, monomer. Zn(2+) is required as a cofactor.

It is found in the cytoplasm. The catalysed reaction is tRNA(Cys) + L-cysteine + ATP = L-cysteinyl-tRNA(Cys) + AMP + diphosphate. This is Cysteine--tRNA ligase from Actinobacillus pleuropneumoniae serotype 3 (strain JL03).